The primary structure comprises 809 residues: MSDNTKTNSRNKSVKRTKKVKKKKKFGFFKKLFTILFCLFILLSVAASGVIFAIVKTSPNLDINGTILNLDQPSQLYDDNNNPMDTVVTNQRRYVVSIKDMPKNLSNAFVSIEDERFYKHSGIDTKRILGAFYNDIKSKIHKQNSIQGASTITQQLIKNRMFLNDSLENRISFKRKIQEAYLSIKLEQSLSKSQILEAYMNTIFLGVQANGVEAASRQYFNKSAKDLNLIECAFIAGLAQSPSAYYPFSQNVAKNPNIYLDRTKLVLYKMRQNNYIDFSTYQNAINDLNNNKLAFSQQKISNKYTYEWFSIPVVNQVKQDLKSQYHYTDEEIDSLLRDGGLKIYTTMNTSMESNVQNILDNNSTLKSYSYADKNGIIQPEAAATLFDYHTGEIKAIVGGRGQQPPSSYNRADSSNYLRSVGSSIKPLTVYAPAIDTKLATEDTIVNDSPLSSDVAEKYGSNGVPYNPHNDDGGYSGPVNLKTALTKSINLVAIKLEDKLGLSTGAAYAQKFGLTLNNDDKSSIAALSLGEIRGSNTTTMAAAYGVFGNNGLYSEPRLYRKVVDKTGKVLLENNYSTRKVISPQSAYIMYDLLKGPVSAGGTGSYARFGDMPVAGKTGTASDSKNLWFCGLTPYYSAAVWVGNDQPTKLSLGSNDVAEIWGEIMKMANVNLTVKDIDAPGGVTKIGDSYYIDGTSPSNLSGDDSSSSTASKPQTPTTNTQNNTNNNVANPNSNNTTNSNTSNSTETPAQNTQQPTPTPTPSTNNTPGNTNTNTNTNNNTNTNTNTNNNNTNNSSSGNNNPPNNNTTNTNK.

The Cytoplasmic portion of the chain corresponds to M1–T34. A helical; Signal-anchor for type II membrane protein membrane pass occupies residues I35–V55. Over K56 to K809 the chain is Extracellular. The transglycosylase stretch occupies residues S74–N251. E113 serves as the catalytic Proton donor; for transglycosylase activity. A transpeptidase region spans residues A381–K664. S422 (acyl-ester intermediate; for transpeptidase activity) is an active-site residue. The segment at S694–K809 is disordered.

This sequence in the N-terminal section; belongs to the glycosyltransferase 51 family. In the C-terminal section; belongs to the transpeptidase family.

It localises to the cell membrane. The enzyme catalyses [GlcNAc-(1-&gt;4)-Mur2Ac(oyl-L-Ala-gamma-D-Glu-L-Lys-D-Ala-D-Ala)](n)-di-trans,octa-cis-undecaprenyl diphosphate + beta-D-GlcNAc-(1-&gt;4)-Mur2Ac(oyl-L-Ala-gamma-D-Glu-L-Lys-D-Ala-D-Ala)-di-trans,octa-cis-undecaprenyl diphosphate = [GlcNAc-(1-&gt;4)-Mur2Ac(oyl-L-Ala-gamma-D-Glu-L-Lys-D-Ala-D-Ala)](n+1)-di-trans,octa-cis-undecaprenyl diphosphate + di-trans,octa-cis-undecaprenyl diphosphate + H(+). It carries out the reaction Preferential cleavage: (Ac)2-L-Lys-D-Ala-|-D-Ala. Also transpeptidation of peptidyl-alanyl moieties that are N-acyl substituents of D-alanine.. The protein operates within cell wall biogenesis; peptidoglycan biosynthesis. Functionally, cell wall formation. Synthesis of cross-linked peptidoglycan from the lipid intermediates. The enzyme has a penicillin-insensitive transglycosylase N-terminal domain (formation of linear glycan strands) and a penicillin-sensitive transpeptidase C-terminal domain (cross-linking of the peptide subunits). In Clostridium acetobutylicum (strain ATCC 824 / DSM 792 / JCM 1419 / IAM 19013 / LMG 5710 / NBRC 13948 / NRRL B-527 / VKM B-1787 / 2291 / W), this protein is Penicillin-binding protein 1A (pbpA).